The following is a 178-amino-acid chain: MALISSAAVTTINRAPVQANLATPFTGLKSSAGFPVTKKNNDITSITSNGSRVNCMQVWPPVGKKKFETLSYLPPLTDEQLLKEVEYLLRKGWVPCVEFELEKGFVHRQYNSSPGYYDGRYWTMWRLPLFGTTDAAQVLKEVAECKAEYPEAFIRIIGFDNVRQVQCISFIASTPKVY.

A chloroplast-targeting transit peptide spans methionine 1–asparagine 54.

Belongs to the RuBisCO small chain family. As to quaternary structure, heterohexadecamer of 8 large and 8 small subunits.

The protein resides in the plastid. Its subcellular location is the chloroplast. RuBisCO catalyzes two reactions: the carboxylation of D-ribulose 1,5-bisphosphate, the primary event in carbon dioxide fixation, as well as the oxidative fragmentation of the pentose substrate. Both reactions occur simultaneously and in competition at the same active site. Although the small subunit is not catalytic it is essential for maximal activity. This Trifolium repens (Creeping white clover) protein is Ribulose bisphosphate carboxylase small subunit, chloroplastic.